Here is a 176-residue protein sequence, read N- to C-terminus: Shikimate kinase (176 aa).

An ATP-binding site is contributed by 14–19 (GAGKSS). Ser18 is a binding site for Mg(2+). Asp36, Arg60, and Gly82 together coordinate substrate. Arg120 serves as a coordination point for ATP. Arg138 contributes to the substrate binding site.

The protein belongs to the shikimate kinase family. In terms of assembly, monomer. Mg(2+) is required as a cofactor.

It is found in the cytoplasm. The catalysed reaction is shikimate + ATP = 3-phosphoshikimate + ADP + H(+). It participates in metabolic intermediate biosynthesis; chorismate biosynthesis; chorismate from D-erythrose 4-phosphate and phosphoenolpyruvate: step 5/7. Its function is as follows. Catalyzes the specific phosphorylation of the 3-hydroxyl group of shikimic acid using ATP as a cosubstrate. This chain is Shikimate kinase, found in Dehalococcoides mccartyi (strain ATCC BAA-2100 / JCM 16839 / KCTC 5957 / BAV1).